A 466-amino-acid polypeptide reads, in one-letter code: UDP-N-acetylmuramoylalanine--D-glutamate ligase (466 aa).

124 to 130 contributes to the ATP binding site; it reads GSDGKTT.

The protein belongs to the MurCDEF family.

The protein localises to the cytoplasm. The enzyme catalyses UDP-N-acetyl-alpha-D-muramoyl-L-alanine + D-glutamate + ATP = UDP-N-acetyl-alpha-D-muramoyl-L-alanyl-D-glutamate + ADP + phosphate + H(+). It participates in cell wall biogenesis; peptidoglycan biosynthesis. Cell wall formation. Catalyzes the addition of glutamate to the nucleotide precursor UDP-N-acetylmuramoyl-L-alanine (UMA). This is UDP-N-acetylmuramoylalanine--D-glutamate ligase from Acetivibrio thermocellus (strain ATCC 27405 / DSM 1237 / JCM 9322 / NBRC 103400 / NCIMB 10682 / NRRL B-4536 / VPI 7372) (Clostridium thermocellum).